The primary structure comprises 585 residues: Arginine--tRNA ligase (585 aa).

The short motif at 131-141 is the 'HIGH' region element; sequence ANPTGPMHVGH.

Belongs to the class-I aminoacyl-tRNA synthetase family. As to quaternary structure, monomer.

It is found in the cytoplasm. The catalysed reaction is tRNA(Arg) + L-arginine + ATP = L-arginyl-tRNA(Arg) + AMP + diphosphate. This chain is Arginine--tRNA ligase, found in Agrobacterium fabrum (strain C58 / ATCC 33970) (Agrobacterium tumefaciens (strain C58)).